A 344-amino-acid polypeptide reads, in one-letter code: Ferredoxin--NADP reductase (344 aa).

Residues serine 12, aspartate 31, lysine 39, tyrosine 43, valine 83, isoleucine 118, aspartate 285, and serine 326 each coordinate FAD.

Belongs to the ferredoxin--NADP reductase type 2 family. In terms of assembly, homodimer. It depends on FAD as a cofactor.

The enzyme catalyses 2 reduced [2Fe-2S]-[ferredoxin] + NADP(+) + H(+) = 2 oxidized [2Fe-2S]-[ferredoxin] + NADPH. The chain is Ferredoxin--NADP reductase from Staphylococcus aureus (strain MW2).